The sequence spans 455 residues: GTPase Der (455 aa).

2 EngA-type G domains span residues 4 to 169 and 178 to 353; these read PVVA…PPKD and IQMS…EQHR. Residues 10 to 17, 57 to 61, 120 to 123, 184 to 191, 231 to 235, and 296 to 299 each bind GTP; these read GRPNVGKS, DTGGL, NKCE, DTAGI, and NKWD. A KH-like domain is found at 354-439; it reads RRVTTSVVNE…PLKLFWRGKQ (86 aa).

The protein belongs to the TRAFAC class TrmE-Era-EngA-EngB-Septin-like GTPase superfamily. EngA (Der) GTPase family. Associates with the 50S ribosomal subunit.

Functionally, GTPase that plays an essential role in the late steps of ribosome biogenesis. This Synechococcus sp. (strain CC9902) protein is GTPase Der.